A 260-amino-acid chain; its full sequence is Hydroxyethylthiazole kinase 1 (260 aa).

Residue Met39 participates in substrate binding. ATP-binding residues include Arg115 and Thr160. Gly187 serves as a coordination point for substrate.

This sequence belongs to the Thz kinase family. The cofactor is Mg(2+).

The enzyme catalyses 5-(2-hydroxyethyl)-4-methylthiazole + ATP = 4-methyl-5-(2-phosphooxyethyl)-thiazole + ADP + H(+). The protein operates within cofactor biosynthesis; thiamine diphosphate biosynthesis; 4-methyl-5-(2-phosphoethyl)-thiazole from 5-(2-hydroxyethyl)-4-methylthiazole: step 1/1. Catalyzes the phosphorylation of the hydroxyl group of 4-methyl-5-beta-hydroxyethylthiazole (THZ). This chain is Hydroxyethylthiazole kinase 1, found in Streptococcus pneumoniae (strain 70585).